A 531-amino-acid polypeptide reads, in one-letter code: Importin subunit alpha-3 (531 aa).

The IBB domain occupies 1–58; sequence MSLRPSAKTEVRRNRYKVAVDAEEGRRRREDNLVEIRKNKREENLQKKRFTSSMAFGS. ARM repeat units lie at residues 111–153, 154–198, 199–236, 237–281, 282–321, 322–364, 365–405, and 406–447; these read INEV…TSEN, TNVI…CRDL, VLSY…RGKP, PPAF…DKIQ, AVIE…DDLQ, TQMV…NADQ, IQAV…GGTH, and DQIK…VVGE. Positions 500–524 are disordered; sequence DNEEEGNDENHAPQSGFQFGSTNVP. Over residues 511 to 524 the composition is skewed to polar residues; sequence APQSGFQFGSTNVP.

Belongs to the importin alpha family. In terms of assembly, forms a complex with importin subunit beta-1. Interacts with PRL1. Interacts with A.tumefaciens VirD2 and VirE2.

The protein resides in the nucleus. Binds to conventional NLS motifs and mediates nuclear protein import across the nuclear envelope. Acts as a cellular receptor for the nuclear import of the virD2 protein of Agrobacterium, but is not essential for Agrobacterium-mediated root transformation. May be involved in the regulation of pathogen-induced salicylic acid accumulation. In Arabidopsis thaliana (Mouse-ear cress), this protein is Importin subunit alpha-3.